We begin with the raw amino-acid sequence, 264 residues long: 3-methyl-2-oxobutanoate hydroxymethyltransferase (264 aa).

Mg(2+) contacts are provided by Asp-45 and Asp-84. Residues 45 to 46, Asp-84, and Lys-112 contribute to the 3-methyl-2-oxobutanoate site; that span reads DS. Position 114 (Glu-114) interacts with Mg(2+). The Proton acceptor role is filled by Glu-181.

The protein belongs to the PanB family. Homodecamer; pentamer of dimers. Requires Mg(2+) as cofactor.

The protein resides in the cytoplasm. The enzyme catalyses 3-methyl-2-oxobutanoate + (6R)-5,10-methylene-5,6,7,8-tetrahydrofolate + H2O = 2-dehydropantoate + (6S)-5,6,7,8-tetrahydrofolate. The protein operates within cofactor biosynthesis; (R)-pantothenate biosynthesis; (R)-pantoate from 3-methyl-2-oxobutanoate: step 1/2. Its function is as follows. Catalyzes the reversible reaction in which hydroxymethyl group from 5,10-methylenetetrahydrofolate is transferred onto alpha-ketoisovalerate to form ketopantoate. The protein is 3-methyl-2-oxobutanoate hydroxymethyltransferase of Shewanella putrefaciens (strain CN-32 / ATCC BAA-453).